The following is a 97-amino-acid chain: Co-chaperonin GroES (97 aa).

It belongs to the GroES chaperonin family. In terms of assembly, heptamer of 7 subunits arranged in a ring. Interacts with the chaperonin GroEL.

The protein resides in the cytoplasm. In terms of biological role, together with the chaperonin GroEL, plays an essential role in assisting protein folding. The GroEL-GroES system forms a nano-cage that allows encapsulation of the non-native substrate proteins and provides a physical environment optimized to promote and accelerate protein folding. GroES binds to the apical surface of the GroEL ring, thereby capping the opening of the GroEL channel. The protein is Co-chaperonin GroES of Pseudomonas putida (strain GB-1).